A 121-amino-acid polypeptide reads, in one-letter code: Large ribosomal subunit protein eL18 (121 aa).

It belongs to the eukaryotic ribosomal protein eL18 family.

The sequence is that of Large ribosomal subunit protein eL18 from Methanospirillum hungatei JF-1 (strain ATCC 27890 / DSM 864 / NBRC 100397 / JF-1).